Consider the following 241-residue polypeptide: Aspartate/glutamate leucyltransferase (241 aa).

This sequence belongs to the R-transferase family. Bpt subfamily.

The protein localises to the cytoplasm. It catalyses the reaction N-terminal L-glutamyl-[protein] + L-leucyl-tRNA(Leu) = N-terminal L-leucyl-L-glutamyl-[protein] + tRNA(Leu) + H(+). The enzyme catalyses N-terminal L-aspartyl-[protein] + L-leucyl-tRNA(Leu) = N-terminal L-leucyl-L-aspartyl-[protein] + tRNA(Leu) + H(+). Functionally, functions in the N-end rule pathway of protein degradation where it conjugates Leu from its aminoacyl-tRNA to the N-termini of proteins containing an N-terminal aspartate or glutamate. In Helicobacter hepaticus (strain ATCC 51449 / 3B1), this protein is Aspartate/glutamate leucyltransferase.